A 376-amino-acid polypeptide reads, in one-letter code: Cytochrome b (376 aa).

4 consecutive transmembrane segments (helical) span residues 28-48 (YGFL…FLAS), 72-94 (WCFR…LHIL), 107-127 (SWIS…IGYV), and 169-189 (FFVL…IHIF). The heme b site is built by histidine 78 and histidine 92. Heme b is bound by residues histidine 173 and histidine 187. Histidine 192 lines the a ubiquinone pocket. A run of 4 helical transmembrane segments spans residues 214–234 (LLSL…IQSI), 274–294 (IPSK…LFLL), 317–337 (VPII…CPLP), and 340–360 (IFIL…LFSL).

It belongs to the cytochrome b family. In terms of assembly, the main subunits of complex b-c1 are: cytochrome b, cytochrome c1 and the Rieske protein. Requires heme b as cofactor.

It localises to the mitochondrion inner membrane. Component of the ubiquinol-cytochrome c reductase complex (complex III or cytochrome b-c1 complex) that is part of the mitochondrial respiratory chain. The b-c1 complex mediates electron transfer from ubiquinol to cytochrome c. Contributes to the generation of a proton gradient across the mitochondrial membrane that is then used for ATP synthesis. The sequence is that of Cytochrome b (MT-CYB) from Plasmodium berghei.